A 326-amino-acid chain; its full sequence is MGDTKVETISRLAQWRIENFGPCSFKKSDPFKVGIWNWHLSIERNRYLSVRLFPELSRVSKEQPPVAKFVLRVSNVGPNRRFYISPVYEKLLRTTDDCVWHVDSSFHGRFTIDVEFLDLKICPVNGGEASPVWPTDATMQSISTQTTLKCLSRMLEESILTDVIIHTADGTLSAHKAILSASSTVFKSMFHHDLMEKESSTIHIDDMSRESCMALLSYLYGNITQEEFWKHRLALLGAANKYDITDLKAACEESLMEDINSSNVLERLQEAWLYQLEKLKKGCLMYLFDFGKIYDVREEISSFFRQADRELMLEMFQEVLSVWKPV.

The BTB domain occupies 161-228; the sequence is TDVIIHTADG…LYGNITQEEF (68 aa).

In terms of assembly, homodimer. Interacts with CUL3A and CUL3B.

The protein operates within protein modification; protein ubiquitination. Functionally, may act as a substrate-specific adapter of an E3 ubiquitin-protein ligase complex (CUL3-RBX1-BTB) which mediates the ubiquitination and subsequent proteasomal degradation of target proteins. This Arabidopsis thaliana (Mouse-ear cress) protein is BTB/POZ domain-containing protein At1g21780.